A 59-amino-acid chain; its full sequence is Large ribosomal subunit protein bL32 (59 aa).

Basic residues predominate over residues 1–16 (MAVPKRKVSPHRRGNR). The segment at 1 to 20 (MAVPKRKVSPHRRGNRRAHD) is disordered.

It belongs to the bacterial ribosomal protein bL32 family.

The chain is Large ribosomal subunit protein bL32 from Erythrobacter litoralis (strain HTCC2594).